A 421-amino-acid polypeptide reads, in one-letter code: Lipid II:glycine glycyltransferase (421 aa).

This sequence belongs to the FemABX family. Monomer.

Its subcellular location is the cytoplasm. It catalyses the reaction beta-D-GlcNAc-(1-&gt;4)-Mur2Ac(oyl-L-Ala-D-isoglutaminyl-L-Lys-D-Ala-D-Ala)-di-trans,octa-cis-undecaprenyl diphosphate + glycyl-tRNA(Gly) = beta-D-GlcNAc-(1-&gt;4)-Mur2Ac(oyl-L-Ala-D-isoglutaminyl-L-Lys-(N(6)-Gly)-D-Ala-D-Ala)-di-trans,octa-cis-undecaprenyl diphosphate + tRNA(Gly) + H(+). Its function is as follows. Catalyzes the incorporation of the first glycine of the pentaglycine interpeptide bridge, which is characteristic of the S.aureus peptidoglycan. This glycine is added to the epsilon-amino group of the L-lysine of the membrane-bound lipid II intermediate (GlcNAc-(beta-1,4)-N-acetylmuramic acid(-L-Ala-D-iGln-L-Lys-D-Ala-D-Ala)-pyrophosphoryl-undecaprenol), using glycyl-tRNA(Gly) as donor, in a ribosome-independent mechanism. This chain is Lipid II:glycine glycyltransferase (femX), found in Staphylococcus aureus (strain MSSA476).